Consider the following 281-residue polypeptide: Ribosomal protein L11 methyltransferase (281 aa).

Positions 131, 152, 174, and 217 each coordinate S-adenosyl-L-methionine.

This sequence belongs to the methyltransferase superfamily. PrmA family.

It is found in the cytoplasm. The catalysed reaction is L-lysyl-[protein] + 3 S-adenosyl-L-methionine = N(6),N(6),N(6)-trimethyl-L-lysyl-[protein] + 3 S-adenosyl-L-homocysteine + 3 H(+). In terms of biological role, methylates ribosomal protein L11. This is Ribosomal protein L11 methyltransferase from Phocaeicola vulgatus (strain ATCC 8482 / DSM 1447 / JCM 5826 / CCUG 4940 / NBRC 14291 / NCTC 11154) (Bacteroides vulgatus).